The following is a 351-amino-acid chain: Phosphoribosylformylglycinamidine cyclo-ligase (351 aa).

This sequence belongs to the AIR synthase family.

It localises to the cytoplasm. The catalysed reaction is 2-formamido-N(1)-(5-O-phospho-beta-D-ribosyl)acetamidine + ATP = 5-amino-1-(5-phospho-beta-D-ribosyl)imidazole + ADP + phosphate + H(+). It functions in the pathway purine metabolism; IMP biosynthesis via de novo pathway; 5-amino-1-(5-phospho-D-ribosyl)imidazole from N(2)-formyl-N(1)-(5-phospho-D-ribosyl)glycinamide: step 2/2. The protein is Phosphoribosylformylglycinamidine cyclo-ligase of Burkholderia vietnamiensis (strain G4 / LMG 22486) (Burkholderia cepacia (strain R1808)).